Reading from the N-terminus, the 440-residue chain is Deoxyguanosinetriphosphate triphosphohydrolase-like protein (440 aa).

Residues 62 to 255 enclose the HD domain; it reads RLTHSLEAAQ…MELADDIAYG (194 aa).

It belongs to the dGTPase family. Type 2 subfamily.

This Vibrio parahaemolyticus serotype O3:K6 (strain RIMD 2210633) protein is Deoxyguanosinetriphosphate triphosphohydrolase-like protein.